The primary structure comprises 90 residues: Protein S100-A6 (90 aa).

2 EF-hand domains span residues 12 to 47 (LIGI…IGSK) and 48 to 83 (LQDA…LAMI). Ca(2+)-binding residues include Thr28 and Glu33. The residue at position 40 (Lys40) is an N6-acetyllysine. Ser46 is modified (phosphoserine). Lys47 carries the N6-acetyllysine; alternate modification. Lys47 is modified (N6-succinyllysine; alternate). Ca(2+) is bound by residues Asp61, Asn63, Asp65, Glu67, and Glu72.

The protein belongs to the S-100 family. In terms of assembly, homodimer; head to tail assembly of 2 subunits. Interacts with CACYBP in a calcium-dependent manner. Interacts with ANXA2 and ANXA11 (via N-terminus). Interacts with SUGT1. Interacts with TP53; has higher affinity for TP53 that is phosphorylated on its N-terminal domain, and lower affinity for TP53 that is phosphorylated on its C-terminal domain. Interacts with tropomyosin. Interacts with FKBP4. Interacts with PPP5C (via TPR repeats); the interaction is calcium-dependent and modulates PPP5C activity. Interacts with TPPP; this interaction inhibits TPPP dimerization.

The protein localises to the nucleus envelope. The protein resides in the cytoplasm. It is found in the cell membrane. Functionally, may function as calcium sensor and modulator, contributing to cellular calcium signaling. May function by interacting with other proteins, such as TPR-containing proteins, and indirectly play a role in many physiological processes such as the reorganization of the actin cytoskeleton and in cell motility. Binds 2 calcium ions. Calcium binding is cooperative. The sequence is that of Protein S100-A6 (S100A6) from Oryctolagus cuniculus (Rabbit).